The sequence spans 207 residues: Histidine biosynthesis bifunctional protein HisIE (207 aa).

A phosphoribosyl-AMP cyclohydrolase region spans residues 1–115 (MLSKKENLLK…FFLKENTLNF (115 aa)). The segment at 116–207 (LSKLEDLIED…NLKKRKTEKL (92 aa)) is phosphoribosyl-ATP pyrophosphohydrolase.

The protein in the N-terminal section; belongs to the PRA-CH family. It in the C-terminal section; belongs to the PRA-PH family.

It is found in the cytoplasm. The catalysed reaction is 1-(5-phospho-beta-D-ribosyl)-ATP + H2O = 1-(5-phospho-beta-D-ribosyl)-5'-AMP + diphosphate + H(+). The enzyme catalyses 1-(5-phospho-beta-D-ribosyl)-5'-AMP + H2O = 1-(5-phospho-beta-D-ribosyl)-5-[(5-phospho-beta-D-ribosylamino)methylideneamino]imidazole-4-carboxamide. It participates in amino-acid biosynthesis; L-histidine biosynthesis; L-histidine from 5-phospho-alpha-D-ribose 1-diphosphate: step 2/9. It functions in the pathway amino-acid biosynthesis; L-histidine biosynthesis; L-histidine from 5-phospho-alpha-D-ribose 1-diphosphate: step 3/9. The protein is Histidine biosynthesis bifunctional protein HisIE (hisI) of Buchnera aphidicola subsp. Schizaphis graminum (strain Sg).